We begin with the raw amino-acid sequence, 167 residues long: Large ribosomal subunit protein uL10 (167 aa).

It belongs to the universal ribosomal protein uL10 family. As to quaternary structure, part of the ribosomal stalk of the 50S ribosomal subunit. The N-terminus interacts with L11 and the large rRNA to form the base of the stalk. The C-terminus forms an elongated spine to which L12 dimers bind in a sequential fashion forming a multimeric L10(L12)X complex.

In terms of biological role, forms part of the ribosomal stalk, playing a central role in the interaction of the ribosome with GTP-bound translation factors. This chain is Large ribosomal subunit protein uL10, found in Alkaliphilus oremlandii (strain OhILAs) (Clostridium oremlandii (strain OhILAs)).